The following is a 177-amino-acid chain: MEIRRRSVRHLISLLLFLFYSETACHPLGKRPCKMQAFRIWDVNQKTFYMRNNQLVAGYLQESNTKLQEKIDVVPIEPDALFLGLHGRKLCLACVKSGDEIRFQLEAVNITDLSKNKEENKRFTFIRSNSGPTTSFESAACPGWFLCTAQEADRPVSLTNKPKESFMVTKFYLQEDQ.

The N-terminal stretch at 1 to 25 (MEIRRRSVRHLISLLLFLFYSETAC) is a signal peptide. A disulfide bridge connects residues Cys-91 and Cys-141. N-linked (GlcNAc...) asparagine glycosylation occurs at Asn-109.

It belongs to the IL-1 family.

Its subcellular location is the secreted. Anti-inflammatory antagonist of interleukin-1 family of proinflammatory cytokines such as interleukin-1beta/IL1B and interleukin-1alpha/IL1A. Protects from immune dysregulation and uncontrolled systemic inflammation triggered by IL1 for a range of innate stimulatory agents such as pathogens. The chain is Interleukin-1 receptor antagonist protein (IL1RN) from Equus caballus (Horse).